We begin with the raw amino-acid sequence, 679 residues long: MSEPRQILVTSALPYANGSIHLGHMLEYIQTDMWVRFQKLRGNQCIYVCADDAHGSAIMLRAEKEGITPEQLIANVQAEHSSDFADFLVDFDNFHSTHSEENRELSSLIYSRLREAGHIATRSVTQYFDPEKGMFLADRFIKGTCPKCAAEDQYGDNCEKCGATYAPTELKNPKSAISGATPVLRDSQHFFFKLPDFQAMLQQWTRSGTLQDAVANKLAEWLDSGLQEWDISRDAPYFGFEIPGEPGKYFYVWLDAPIGYMASFKNLCARRPELDFDAFWNEGSKAELYHFIGKDIVNFHALFWPAMLEGAGFRKPTAVNVHGYLTVNGAKMSKSRGTFIKARTYLDHLQPEYLRYYYAAKLGRGVDDLDLNLEDFVQKVNSDLVGKVVNIASRCAGFIHKGNEGVMVGGDAAPELTEAFLAAAPSIAEAYEARDFGRAMREIMALADRANAWIADKAPWSLAKQEGKQDEVQAICAQGINLFRQLVIFLKPVLPVLAADAEAFLNVAPLTWNDHLTRLENHTLNPFKALMSRIEPAKVEAMVAASKEDLLAAEAKAPAGNGELAKDPLSAEIEFDTFAAVDLRVALIVKAEAVAGADKLLQLTLDIGDERRNVFSGIKSAYPDPSKLEGRLTMMVANLKPRKMRFGVSEGMVMAAGPGGEEIYLLSPDSGAKPGQRIK.

The 'HIGH' region signature appears at 14-24; it reads PYANGSIHLGH. Zn(2+) is bound by residues C145, C148, C158, and C161. A 'KMSKS' region motif is present at residues 331–335; the sequence is KMSKS. K334 is an ATP binding site. Residues 577 to 679 form the tRNA-binding domain; it reads TFAAVDLRVA…SGAKPGQRIK (103 aa).

The protein belongs to the class-I aminoacyl-tRNA synthetase family. MetG type 1 subfamily. As to quaternary structure, homodimer. Requires Zn(2+) as cofactor.

It is found in the cytoplasm. The catalysed reaction is tRNA(Met) + L-methionine + ATP = L-methionyl-tRNA(Met) + AMP + diphosphate. Its function is as follows. Is required not only for elongation of protein synthesis but also for the initiation of all mRNA translation through initiator tRNA(fMet) aminoacylation. The sequence is that of Methionine--tRNA ligase from Pseudomonas putida (strain ATCC 700007 / DSM 6899 / JCM 31910 / BCRC 17059 / LMG 24140 / F1).